The sequence spans 255 residues: tRNA uridine(34) hydroxylase (255 aa).

The Rhodanese domain occupies 125 to 219 (AAPDTLLIDT…YLEGIPESES (95 aa)). The active-site Cysteine persulfide intermediate is the C179.

The protein belongs to the TrhO family.

The enzyme catalyses uridine(34) in tRNA + AH2 + O2 = 5-hydroxyuridine(34) in tRNA + A + H2O. Functionally, catalyzes oxygen-dependent 5-hydroxyuridine (ho5U) modification at position 34 in tRNAs. This chain is tRNA uridine(34) hydroxylase, found in Nitrobacter hamburgensis (strain DSM 10229 / NCIMB 13809 / X14).